Here is a 221-residue protein sequence, read N- to C-terminus: uncharacterized protein (221 aa).

This is an uncharacterized protein from Archaeoglobus fulgidus (strain ATCC 49558 / DSM 4304 / JCM 9628 / NBRC 100126 / VC-16).